A 999-amino-acid polypeptide reads, in one-letter code: Probable metabotropic glutamate receptor mgl-1 (999 aa).

L-glutamate contacts are provided by residues Ser202, Ala223–Thr225, Tyr273, Glu363, and Lys455. Asn518 carries an N-linked (GlcNAc...) asparagine glycan. 7 consecutive transmembrane segments (helical) span residues Ser682–Val704, Leu719–Ser739, Thr751–Asn769, Val792–Val812, His836–Val857, Phe871–Thr893, and Leu904–Phe929. The disordered stretch occupies residues Asp975 to Leu999. Over residues Lys984–Ser993 the composition is skewed to low complexity.

This sequence belongs to the G-protein coupled receptor 3 family.

It is found in the cell membrane. G-protein coupled receptor for glutamate. Ligand binding causes a conformation change that triggers signaling via guanine nucleotide-binding proteins (G proteins) and modulates the activity of down-stream effectors. This Caenorhabditis elegans protein is Probable metabotropic glutamate receptor mgl-1 (mgl-1).